The following is a 571-amino-acid chain: 5' exonuclease Apollo (571 aa).

Disordered regions lie at residues 346 to 386 and 431 to 487; these read TSRP…TDRN and MDDN…SMHD. Composition is skewed to basic and acidic residues over residues 367–386 and 453–468; these read NHDDMDSNDTEIDHDTTDRN and ECDHESPTKSSKEKSP. Over residues 470 to 487 the composition is skewed to polar residues; sequence MGSTNSGEMCSSMDSMHD. The short motif at 501-532 is the TBM element; the sequence is NPQSVTSAIPITLESEQFEHWLLENFTIPAEE.

Belongs to the DNA repair metallo-beta-lactamase (DRMBL) family. As to quaternary structure, interacts with terf2; the interaction is direct.

It localises to the chromosome. Its subcellular location is the telomere. The protein localises to the nucleus. It carries out the reaction a beta-lactam + H2O = a substituted beta-amino acid. Its function is as follows. 5'-3' exonuclease that plays a central role in telomere maintenance and protection during S-phase. Participates in the protection of telomeres against non-homologous end-joining (NHEJ)-mediated repair, thereby ensuring that telomeres do not fuse. Plays a key role in telomeric loop (T loop) formation by being recruited by terf2 at the leading end telomeres and by processing leading-end telomeres immediately after their replication via its exonuclease activity: generates 3' single-stranded overhang at the leading end telomeres avoiding blunt leading-end telomeres that are vulnerable to end-joining reactions and expose the telomere end in a manner that activates the DNA repair pathways. Possesses beta-lactamase activity, catalyzing the hydrolysis of penicillin G and nitrocefin. Exhibits no activity towards other beta-lactam antibiotic classes including cephalosporins (cefotaxime) and carbapenems (imipenem). This is 5' exonuclease Apollo (dclre1b) from Danio rerio (Zebrafish).